Consider the following 482-residue polypeptide: tRNA sulfurtransferase (482 aa).

One can recognise a THUMP domain in the interval 61–165; sequence LTIRDALTRI…DDRLLLIKGR (105 aa). ATP is bound by residues 183–184, K265, G287, and Q296; that span reads LI. C344 and C456 are joined by a disulfide. In terms of domain architecture, Rhodanese spans 404 to 482; the sequence is FGPNDVILDI…GFKNVKVYRP (79 aa). The active-site Cysteine persulfide intermediate is the C456.

Belongs to the ThiI family. Interacts with IscS.

Its subcellular location is the cytoplasm. The catalysed reaction is [ThiI sulfur-carrier protein]-S-sulfanyl-L-cysteine + a uridine in tRNA + 2 reduced [2Fe-2S]-[ferredoxin] + ATP + H(+) = [ThiI sulfur-carrier protein]-L-cysteine + a 4-thiouridine in tRNA + 2 oxidized [2Fe-2S]-[ferredoxin] + AMP + diphosphate. The enzyme catalyses [ThiS sulfur-carrier protein]-C-terminal Gly-Gly-AMP + S-sulfanyl-L-cysteinyl-[cysteine desulfurase] + AH2 = [ThiS sulfur-carrier protein]-C-terminal-Gly-aminoethanethioate + L-cysteinyl-[cysteine desulfurase] + A + AMP + 2 H(+). It participates in cofactor biosynthesis; thiamine diphosphate biosynthesis. Catalyzes the ATP-dependent transfer of a sulfur to tRNA to produce 4-thiouridine in position 8 of tRNAs, which functions as a near-UV photosensor. Also catalyzes the transfer of sulfur to the sulfur carrier protein ThiS, forming ThiS-thiocarboxylate. This is a step in the synthesis of thiazole, in the thiamine biosynthesis pathway. The sulfur is donated as persulfide by IscS. The chain is tRNA sulfurtransferase from Escherichia coli O157:H7.